Here is a 446-residue protein sequence, read N- to C-terminus: Adenylosuccinate synthetase (446 aa).

Residues 21 to 27 and 49 to 51 contribute to the GTP site; these read GDEGKGK and GHT. Aspartate 22 serves as the catalytic Proton acceptor. Residues aspartate 22 and glycine 49 each coordinate Mg(2+). IMP-binding positions include 22-25, 47-50, threonine 141, arginine 155, glutamine 236, threonine 251, and arginine 319; these read DEGK and NAGH. The active-site Proton donor is histidine 50. Residue 315–321 coordinates substrate; the sequence is VTTGRSR. GTP-binding positions include arginine 321, 347–349, and 429–431; these read KLD and STS.

This sequence belongs to the adenylosuccinate synthetase family. In terms of assembly, homodimer. The cofactor is Mg(2+).

The protein resides in the cytoplasm. The enzyme catalyses IMP + L-aspartate + GTP = N(6)-(1,2-dicarboxyethyl)-AMP + GDP + phosphate + 2 H(+). It functions in the pathway purine metabolism; AMP biosynthesis via de novo pathway; AMP from IMP: step 1/2. Its function is as follows. Plays an important role in the de novo pathway of purine nucleotide biosynthesis. Catalyzes the first committed step in the biosynthesis of AMP from IMP. This is Adenylosuccinate synthetase from Polaromonas naphthalenivorans (strain CJ2).